An 800-amino-acid chain; its full sequence is DNA topoisomerase 4 subunit A (800 aa).

A Topo IIA-type catalytic domain is found at 31–496 (LPDVRDGLKP…ISEIKIDKEV (466 aa)). Residue Y119 is the O-(5'-phospho-DNA)-tyrosine intermediate of the active site.

Belongs to the type II topoisomerase GyrA/ParC subunit family. ParC type 2 subfamily. As to quaternary structure, heterotetramer composed of ParC and ParE.

The protein resides in the cell membrane. It catalyses the reaction ATP-dependent breakage, passage and rejoining of double-stranded DNA.. Its function is as follows. Topoisomerase IV is essential for chromosome segregation. It relaxes supercoiled DNA. Performs the decatenation events required during the replication of a circular DNA molecule. The polypeptide is DNA topoisomerase 4 subunit A (Staphylococcus epidermidis (strain ATCC 12228 / FDA PCI 1200)).